The chain runs to 581 residues: Proline--tRNA ligase (581 aa).

This sequence belongs to the class-II aminoacyl-tRNA synthetase family. ProS type 1 subfamily. Homodimer.

It is found in the cytoplasm. The catalysed reaction is tRNA(Pro) + L-proline + ATP = L-prolyl-tRNA(Pro) + AMP + diphosphate. Functionally, catalyzes the attachment of proline to tRNA(Pro) in a two-step reaction: proline is first activated by ATP to form Pro-AMP and then transferred to the acceptor end of tRNA(Pro). As ProRS can inadvertently accommodate and process non-cognate amino acids such as alanine and cysteine, to avoid such errors it has two additional distinct editing activities against alanine. One activity is designated as 'pretransfer' editing and involves the tRNA(Pro)-independent hydrolysis of activated Ala-AMP. The other activity is designated 'posttransfer' editing and involves deacylation of mischarged Ala-tRNA(Pro). The misacylated Cys-tRNA(Pro) is not edited by ProRS. The protein is Proline--tRNA ligase of Chlamydia trachomatis serovar A (strain ATCC VR-571B / DSM 19440 / HAR-13).